Consider the following 286-residue polypeptide: Ribosomal RNA small subunit methyltransferase A (286 aa).

Residues His-11, Leu-13, Gly-44, Glu-65, Asp-90, and Asn-115 each coordinate S-adenosyl-L-methionine.

The protein belongs to the class I-like SAM-binding methyltransferase superfamily. rRNA adenine N(6)-methyltransferase family. RsmA subfamily.

Its subcellular location is the cytoplasm. The catalysed reaction is adenosine(1518)/adenosine(1519) in 16S rRNA + 4 S-adenosyl-L-methionine = N(6)-dimethyladenosine(1518)/N(6)-dimethyladenosine(1519) in 16S rRNA + 4 S-adenosyl-L-homocysteine + 4 H(+). In terms of biological role, specifically dimethylates two adjacent adenosines (A1518 and A1519) in the loop of a conserved hairpin near the 3'-end of 16S rRNA in the 30S particle. May play a critical role in biogenesis of 30S subunits. This is Ribosomal RNA small subunit methyltransferase A from Nostoc punctiforme (strain ATCC 29133 / PCC 73102).